The chain runs to 188 residues: PRA1 family protein F3 (188 aa).

A run of 4 helical transmembrane segments spans residues 74–94 (IVVLIVIFFSLIWHPTSLIVF), 95–115 (TVLVVVWIFLYFLRDEPIKLF), 123–143 (TVLIVLSVLTVVLLLLTNATF), and 145–165 (IVGALVTGAVLVLIHSVVRKT).

This sequence belongs to the PRA1 family. In terms of assembly, interacts with PRA1F2 and PRA1D. Interacts with ACD11 and BPA1. In terms of tissue distribution, expressed in lateral roots, lateral root caps and columella cells.

The protein localises to the endoplasmic reticulum membrane. It localises to the membrane. Its subcellular location is the cytoplasm. In terms of biological role, may be involved in both secretory and endocytic intracellular trafficking in the endosomal/prevacuolar compartments. This is PRA1 family protein F3 from Arabidopsis thaliana (Mouse-ear cress).